Consider the following 291-residue polypeptide: Phosphatidylglycerol--prolipoprotein diacylglyceryl transferase (291 aa).

A run of 7 helical transmembrane segments spans residues 21–41, 60–80, 96–116, 124–144, 198–218, 225–245, and 258–278; these read IALHWYGFMYLVGFVFAMWLA, LLYAGFAGVFVGGRLGYVLFY, WDGGMSFHGGLVGVICAMWWF, FLQVADFIAPLVPFGLGMGRI, SQLYEMALEGIVLFIILNLYI, GSVSGLFLIGYGIFRVIVEFF, and ISMGQILSIPMILAGILMMIW. Arginine 143 provides a ligand contact to a 1,2-diacyl-sn-glycero-3-phospho-(1'-sn-glycerol).

The protein belongs to the Lgt family.

Its subcellular location is the cell inner membrane. It carries out the reaction L-cysteinyl-[prolipoprotein] + a 1,2-diacyl-sn-glycero-3-phospho-(1'-sn-glycerol) = an S-1,2-diacyl-sn-glyceryl-L-cysteinyl-[prolipoprotein] + sn-glycerol 1-phosphate + H(+). The protein operates within protein modification; lipoprotein biosynthesis (diacylglyceryl transfer). Its function is as follows. Catalyzes the transfer of the diacylglyceryl group from phosphatidylglycerol to the sulfhydryl group of the N-terminal cysteine of a prolipoprotein, the first step in the formation of mature lipoproteins. The polypeptide is Phosphatidylglycerol--prolipoprotein diacylglyceryl transferase (Photorhabdus laumondii subsp. laumondii (strain DSM 15139 / CIP 105565 / TT01) (Photorhabdus luminescens subsp. laumondii)).